We begin with the raw amino-acid sequence, 24 residues long: Humanin-like 11 (24 aa).

It belongs to the humanin family.

Its subcellular location is the secreted. It is found in the cytoplasm. In terms of biological role, plays a role as a neuroprotective and antiapoptotic factor. The sequence is that of Humanin-like 11 from Homo sapiens (Human).